A 139-amino-acid chain; its full sequence is uncharacterized protein (139 aa).

This is an uncharacterized protein from Invertebrate iridescent virus 6 (IIV-6).